Reading from the N-terminus, the 315-residue chain is Homoserine kinase (315 aa).

97-107 (PPARGLGSSAT) serves as a coordination point for ATP.

The protein belongs to the GHMP kinase family. Homoserine kinase subfamily.

Its subcellular location is the cytoplasm. It catalyses the reaction L-homoserine + ATP = O-phospho-L-homoserine + ADP + H(+). It functions in the pathway amino-acid biosynthesis; L-threonine biosynthesis; L-threonine from L-aspartate: step 4/5. Functionally, catalyzes the ATP-dependent phosphorylation of L-homoserine to L-homoserine phosphate. In Prochlorococcus marinus (strain NATL1A), this protein is Homoserine kinase.